A 370-amino-acid polypeptide reads, in one-letter code: Uroporphyrinogen decarboxylase (370 aa).

Substrate-binding positions include 29-33 (RQAGR), Asp-79, Tyr-155, Ser-210, and His-342.

Belongs to the uroporphyrinogen decarboxylase family. In terms of assembly, homodimer.

It localises to the cytoplasm. The enzyme catalyses uroporphyrinogen III + 4 H(+) = coproporphyrinogen III + 4 CO2. Its pathway is porphyrin-containing compound metabolism; protoporphyrin-IX biosynthesis; coproporphyrinogen-III from 5-aminolevulinate: step 4/4. Its function is as follows. Catalyzes the decarboxylation of four acetate groups of uroporphyrinogen-III to yield coproporphyrinogen-III. This Delftia acidovorans (strain DSM 14801 / SPH-1) protein is Uroporphyrinogen decarboxylase.